The chain runs to 238 residues: Sugar fermentation stimulation protein homolog (238 aa).

Belongs to the SfsA family.

This Shewanella denitrificans (strain OS217 / ATCC BAA-1090 / DSM 15013) protein is Sugar fermentation stimulation protein homolog.